Consider the following 445-residue polypeptide: Baccatin III:3-amino-3-phenylpropanoyltransferase (445 aa).

The protein belongs to the plant acyltransferase family.

The catalysed reaction is (3R)-3-amino-3-phenylpropanoyl-CoA + baccatin III = 3'-N-debenzoyl-2'-deoxytaxol + CoA. The protein operates within alkaloid biosynthesis; taxol biosynthesis. Functionally, acyltransferase involved in taxol biosynthesis. Catalyzes the selective 13-O-acylation of baccatin III with (3R)-3-amino-3-phenylpropanoyl-CoA as the acyl donor to form 3'-N-debenzoyl-2'-deoxytaxol. This chain is Baccatin III:3-amino-3-phenylpropanoyltransferase, found in Taxus cuspidata (Japanese yew).